The chain runs to 225 residues: Urease accessory protein UreG (225 aa).

Residues 1–21 (MHLDHHHESAAAVSADARRPD) are disordered. 33–40 (GPVGSGKT) contributes to the GTP binding site.

The protein belongs to the SIMIBI class G3E GTPase family. UreG subfamily. Homodimer. UreD, UreF and UreG form a complex that acts as a GTP-hydrolysis-dependent molecular chaperone, activating the urease apoprotein by helping to assemble the nickel containing metallocenter of UreC. The UreE protein probably delivers the nickel.

It localises to the cytoplasm. Facilitates the functional incorporation of the urease nickel metallocenter. This process requires GTP hydrolysis, probably effectuated by UreG. This is Urease accessory protein UreG from Streptomyces coelicolor (strain ATCC BAA-471 / A3(2) / M145).